We begin with the raw amino-acid sequence, 315 residues long: DNA-directed RNA polymerase subunit alpha (315 aa).

Residues 1–228 (MAQFQIECVE…DLFNPLKDIS (228 aa)) are alpha N-terminal domain (alpha-NTD). Residues 238–315 (IPDDPTAQIP…LPQERSSKHS (78 aa)) are alpha C-terminal domain (alpha-CTD).

It belongs to the RNA polymerase alpha chain family. In terms of assembly, in cyanobacteria the RNAP catalytic core is composed of 2 alpha, 1 beta, 1 beta', 1 gamma and 1 omega subunit. When a sigma factor is associated with the core the holoenzyme is formed, which can initiate transcription.

The enzyme catalyses RNA(n) + a ribonucleoside 5'-triphosphate = RNA(n+1) + diphosphate. Functionally, DNA-dependent RNA polymerase catalyzes the transcription of DNA into RNA using the four ribonucleoside triphosphates as substrates. This Trichormus variabilis (strain ATCC 29413 / PCC 7937) (Anabaena variabilis) protein is DNA-directed RNA polymerase subunit alpha.